A 583-amino-acid polypeptide reads, in one-letter code: Probable phosphoglucomutase, cytoplasmic 1 (583 aa).

Positions 24 and 123 each coordinate alpha-D-glucose 1,6-bisphosphate. Ser-123 functions as the Phosphoserine intermediate in the catalytic mechanism. Positions 123, 299, 301, and 303 each coordinate Mg(2+). Position 123 is a phosphoserine (Ser-123). Residues Asp-303, Arg-304, Thr-367, Glu-386, Ser-388, and Lys-399 each contribute to the alpha-D-glucose 1,6-bisphosphate site.

It belongs to the phosphohexose mutase family. Monomer. Requires Mg(2+) as cofactor.

The protein localises to the cytoplasm. The catalysed reaction is alpha-D-glucose 1-phosphate = alpha-D-glucose 6-phosphate. The enzyme catalyses O-phospho-L-seryl-[protein] + alpha-D-glucose 1-phosphate = alpha-D-glucose 1,6-bisphosphate + L-seryl-[protein]. It catalyses the reaction alpha-D-glucose 1,6-bisphosphate + L-seryl-[protein] = O-phospho-L-seryl-[protein] + alpha-D-glucose 6-phosphate. Functionally, catalyzes the reversible isomerization of alpha-D-glucose 1-phosphate to alpha-D-glucose 6-phosphate. The mechanism proceeds via the intermediate compound alpha-D-glucose 1,6-bisphosphate. This enzyme participates in both the breakdown and synthesis of glucose. This chain is Probable phosphoglucomutase, cytoplasmic 1, found in Arabidopsis thaliana (Mouse-ear cress).